A 300-amino-acid chain; its full sequence is uncharacterized protein (300 aa).

The N-terminal stretch at 1–20 is a signal peptide; that stretch reads MRLLISCILILSILVNFISG. At 21–279 the chain is on the extracellular side; the sequence is HAVLVAPTPF…PCSIYGDGNG (259 aa). N-linked (GlcNAc...) asparagine glycosylation is found at N56, N217, and N278. Residues 280-300 form a helical membrane-spanning segment; sequence SNLIIIPTLLIISILSLILMF.

It localises to the membrane. This is an uncharacterized protein from Dictyostelium discoideum (Social amoeba).